A 184-amino-acid polypeptide reads, in one-letter code: ATP synthase subunit delta (184 aa).

The protein belongs to the ATPase delta chain family. As to quaternary structure, F-type ATPases have 2 components, F(1) - the catalytic core - and F(0) - the membrane proton channel. F(1) has five subunits: alpha(3), beta(3), gamma(1), delta(1), epsilon(1). F(0) has three main subunits: a(1), b(2) and c(10-14). The alpha and beta chains form an alternating ring which encloses part of the gamma chain. F(1) is attached to F(0) by a central stalk formed by the gamma and epsilon chains, while a peripheral stalk is formed by the delta and b chains.

It localises to the cell inner membrane. F(1)F(0) ATP synthase produces ATP from ADP in the presence of a proton or sodium gradient. F-type ATPases consist of two structural domains, F(1) containing the extramembraneous catalytic core and F(0) containing the membrane proton channel, linked together by a central stalk and a peripheral stalk. During catalysis, ATP synthesis in the catalytic domain of F(1) is coupled via a rotary mechanism of the central stalk subunits to proton translocation. In terms of biological role, this protein is part of the stalk that links CF(0) to CF(1). It either transmits conformational changes from CF(0) to CF(1) or is implicated in proton conduction. In Phenylobacterium zucineum (strain HLK1), this protein is ATP synthase subunit delta.